We begin with the raw amino-acid sequence, 249 residues long: MRRPIIAGNWKMHNTTEEARDLVTLLRPLVGTARAEVVVCPPFTAIAATVNAASGSNISVGAQDLFWEDKGAYTGEVSGPMLRDLGCRYVIIGHSERRQYFGETDATVNKKLLAAYRNELLPIVCVGETLAEREAGHTLEVVGRQVREGLKGLETGQARDLVVAYEPVWAIGTGKTATAADAQEVIAFIRKTLGEMYGETAAAIRIQYGGSVKPENIAELMAQPDIDGALVGGASLDAVSFAAIVNYDQ.

9–11 (NWK) is a binding site for substrate. Residue His-94 is the Electrophile of the active site. Residue Glu-166 is the Proton acceptor of the active site. Residues Gly-172, Ser-211, and 232 to 233 (GG) contribute to the substrate site.

The protein belongs to the triosephosphate isomerase family. Homodimer.

Its subcellular location is the cytoplasm. The enzyme catalyses D-glyceraldehyde 3-phosphate = dihydroxyacetone phosphate. The protein operates within carbohydrate biosynthesis; gluconeogenesis. Its pathway is carbohydrate degradation; glycolysis; D-glyceraldehyde 3-phosphate from glycerone phosphate: step 1/1. In terms of biological role, involved in the gluconeogenesis. Catalyzes stereospecifically the conversion of dihydroxyacetone phosphate (DHAP) to D-glyceraldehyde-3-phosphate (G3P). This Moorella thermoacetica (strain ATCC 39073 / JCM 9320) protein is Triosephosphate isomerase.